The sequence spans 177 residues: ATP synthase subunit delta (177 aa).

This sequence belongs to the ATPase delta chain family. As to quaternary structure, F-type ATPases have 2 components, F(1) - the catalytic core - and F(0) - the membrane proton channel. F(1) has five subunits: alpha(3), beta(3), gamma(1), delta(1), epsilon(1). F(0) has three main subunits: a(1), b(2) and c(10-14). The alpha and beta chains form an alternating ring which encloses part of the gamma chain. F(1) is attached to F(0) by a central stalk formed by the gamma and epsilon chains, while a peripheral stalk is formed by the delta and b chains.

The protein localises to the cell inner membrane. Functionally, f(1)F(0) ATP synthase produces ATP from ADP in the presence of a proton or sodium gradient. F-type ATPases consist of two structural domains, F(1) containing the extramembraneous catalytic core and F(0) containing the membrane proton channel, linked together by a central stalk and a peripheral stalk. During catalysis, ATP synthesis in the catalytic domain of F(1) is coupled via a rotary mechanism of the central stalk subunits to proton translocation. Its function is as follows. This protein is part of the stalk that links CF(0) to CF(1). It either transmits conformational changes from CF(0) to CF(1) or is implicated in proton conduction. This Salmonella agona (strain SL483) protein is ATP synthase subunit delta.